The sequence spans 397 residues: Lysophospholipid transporter LplT (397 aa).

The Periplasmic segment spans residues 1-17; that stretch reads MSESVHTNTSLWSKGMK. A helical membrane pass occupies residues 18-38; that stretch reads AVIVAQFLSAFGDNALLFATL. At 39–52 the chain is on the cytoplasmic side; the sequence is ALLKAQFYPEWSQP. Residues 53–73 form a helical membrane-spanning segment; that stretch reads ILQMVFVGAYILFAPFVGQVA. At 74–90 the chain is on the periplasmic side; it reads DSFAKGRVMMFANGLKL. The helical transmembrane segment at 91 to 111 threads the bilayer; the sequence is LGAASICFGINPFLGYTLVGV. At 112–144 the chain is on the cytoplasmic side; sequence GAAAYSPAKYGILGELTTGSKLVKANGLMEAST. A helical transmembrane segment spans residues 145-165; the sequence is IAAILLGSVAGGVLADWHVLV. Ala166 is a topological domain (periplasmic). The helical transmembrane segment at 167-187 threads the bilayer; that stretch reads LAACALAYGGAVVANIYIPKL. Topologically, residues 188–226 are cytoplasmic; it reads AAARPGQSWNLINMTRSFLNACTSLWRNGETRFSLVGTS. A helical membrane pass occupies residues 227–247; sequence LFWGAGVTLRFLLVLWVPVAL. Residues 248 to 256 lie on the Periplasmic side of the membrane; that stretch reads GITDNATPT. A helical transmembrane segment spans residues 257–277; the sequence is YLNAMVAIGIVVGAGAAAKLV. The Cytoplasmic segment spans residues 278 to 280; that stretch reads TLE. The chain crosses the membrane as a helical span at residues 281–301; sequence TMSRCMPAGILIGVVVLIFSL. Over 302–304 the chain is Periplasmic; the sequence is QHE. Residues 305–325 form a helical membrane-spanning segment; sequence LLPAYALLMLIGVMGGFFVVP. At 326–343 the chain is on the cytoplasmic side; the sequence is LNALLQERGKKSVGAGNA. Residues 344 to 364 form a helical membrane-spanning segment; it reads IAVQNLGENSAMLLMLGIYSL. The Periplasmic segment spans residues 365 to 366; that stretch reads AV. Residues 367-387 traverse the membrane as a helical segment; sequence MVGIPVVPIGIGFGALFALAI. The Cytoplasmic segment spans residues 388–397; it reads TALWIWQRRH.

This sequence belongs to the major facilitator superfamily. LplT (TC 2.A.1.42) family.

Its subcellular location is the cell inner membrane. Functionally, catalyzes the facilitated diffusion of 2-acyl-glycero-3-phosphoethanolamine (2-acyl-GPE) into the cell. The protein is Lysophospholipid transporter LplT of Shigella sonnei (strain Ss046).